Reading from the N-terminus, the 954-residue chain is Serine/threonine-protein kinase ste20 (954 aa).

The span at 1 to 17 shows a compositional bias: low complexity; it reads MDGQLSLLSPTSSSSTS. 2 disordered regions span residues 1–165 and 203–316; these read MDGQ…YDPL and AAPA…RKKS. The span at 18-28 shows a compositional bias: basic residues; that stretch reads HSRKRLTKKQR. Composition is skewed to polar residues over residues 33–42, 57–75, and 100–121; these read NHRTSSSFNV, SASSLRQGPNCNQSPSLAR, and RSHTTRSQSANRPYNPTQTIPT. 3 stretches are compositionally biased toward low complexity: residues 127–136, 143–153, and 203–214; these read SPASSSQPQT, SAVASTTVTSS, and AAPAPTSTTTIA. The span at 224 to 234 shows a compositional bias: pro residues; the sequence is VAPPPPPPPPA. Low complexity-rich tracts occupy residues 245–256 and 265–277; these read ARSSKPSKSPKS and ASSFRHSASFSSA. In terms of domain architecture, CRIB spans 334–347; the sequence is ISAPENPVHVTHVG. 2 disordered regions span residues 440–562 and 587–655; these read PMIS…VQAS and QAMA…SNAI. Pro residues-rich tracts occupy residues 463-475 and 514-527; these read RAPPPVPKGPGPL and MPPPGDEAPMPYLP. The Protein kinase domain maps to 674–925; the sequence is YRGFTKIGQG…AHDLLRHDFM (252 aa). ATP-binding positions include 680-688 and Lys-703; that span reads IGQGASGGV. Asp-793 (proton acceptor) is an active-site residue.

This sequence belongs to the protein kinase superfamily. STE Ser/Thr protein kinase family. STE20 subfamily.

It is found in the cytoplasm. Its subcellular location is the nucleus. The catalysed reaction is L-seryl-[protein] + ATP = O-phospho-L-seryl-[protein] + ADP + H(+). It carries out the reaction L-threonyl-[protein] + ATP = O-phospho-L-threonyl-[protein] + ADP + H(+). MAP4K component of the MAPK pathway required for the mating pheromone response and the regulation of cell polarity and cell cycle. Phosphorylates histone H2B to form H2BS10ph. The protein is Serine/threonine-protein kinase ste20 (stk-4) of Neurospora crassa (strain ATCC 24698 / 74-OR23-1A / CBS 708.71 / DSM 1257 / FGSC 987).